Here is a 518-residue protein sequence, read N- to C-terminus: Cytochrome P450 736A117 (518 aa).

N-linked (GlcNAc...) asparagine glycosylation is present at asparagine 12. A helical transmembrane segment spans residues 17 to 37; sequence FLQPLAFTLLAIFLVLLYTWY. Residues asparagine 185, asparagine 275, and asparagine 356 are each glycosylated (N-linked (GlcNAc...) asparagine). Cysteine 460 lines the heme pocket.

Belongs to the cytochrome P450 family. Heme serves as cofactor. As to expression, expressed at similar levels in fruit kernel, seedlings, leaves, stems and buds.

The protein resides in the membrane. The sequence is that of Cytochrome P450 736A117 from Prunus mume (Japanese apricot).